The sequence spans 292 residues: Probable alpha-L-glutamate ligase (292 aa).

The ATP-grasp domain occupies 104-287 (HQLLAAKGID…VATRIIEHVE (184 aa)). Residues Lys141, 178–179 (EF), Asp187, and 211–213 (RSN) each bind ATP. The Mg(2+) site is built by Asp248, Glu260, and Asn262. Asp248, Glu260, and Asn262 together coordinate Mn(2+).

It belongs to the RimK family. Mg(2+) is required as a cofactor. Mn(2+) serves as cofactor.

This Stenotrophomonas maltophilia (strain K279a) protein is Probable alpha-L-glutamate ligase.